Reading from the N-terminus, the 313-residue chain is MILSVIHIFLYFVPVLLAVAFLTLTERKVIGYVQLRKGPNVVGPYGLLQPIADGVKLFIKEPIKPSSSNPSVFFFAPMLALILALLLWMPVPLMDAFIELNFAVLFVLAISSLSVYSIMASGWSSNSKYALLGALRAVAQMVSYEVSLGLIILSLICLVGGFNLAQFFSAQEEVMLMLSCWPLGIMWFISTVAETNRSPFDLTEGESELVSGFNVEYSGGPFALFFLAEYANILFMNVLSALLFLAAHFSLLGVAVKVGLLAGLYLWFRASYPRFRYDQLMHLAWKSFLPLSLGLLMLNFSLPLTFSGIGGGL.

A run of 8 helical transmembrane segments spans residues 2–22, 72–92, 102–122, 148–168, 173–193, 222–244, 249–268, and 293–313; these read ILSV…VAFL, VFFF…MPVP, FAVL…MASG, LGLI…AQFF, EVML…STVA, FALF…ALLF, FSLL…YLWF, and LGLL…GGGL.

It belongs to the complex I subunit 1 family.

It localises to the mitochondrion inner membrane. It carries out the reaction a ubiquinone + NADH + 5 H(+)(in) = a ubiquinol + NAD(+) + 4 H(+)(out). Functionally, core subunit of the mitochondrial membrane respiratory chain NADH dehydrogenase (Complex I) that is believed to belong to the minimal assembly required for catalysis. Complex I functions in the transfer of electrons from NADH to the respiratory chain. The immediate electron acceptor for the enzyme is believed to be ubiquinone. In Branchiostoma lanceolatum (Common lancelet), this protein is NADH-ubiquinone oxidoreductase chain 1 (ND1).